The following is a 759-amino-acid chain: Catalase-peroxidase (759 aa).

The disordered stretch occupies residues 1-24 (MTQDKCPFKEQPSQPNFAGGGTSN). The tryptophyl-tyrosyl-methioninium (Trp-Tyr) (with M-268) cross-link spans 96–242 (WHSAGTYRVF…LAAAHMGLIY (147 aa)). The active-site Proton acceptor is His-97. Residues 242 to 268 (YVNPEGPDGNPDPIAAAHDIRDTFGRM) constitute a cross-link (tryptophyl-tyrosyl-methioninium (Tyr-Met) (with W-96)). His-283 contacts heme b.

It belongs to the peroxidase family. Peroxidase/catalase subfamily. As to quaternary structure, homodimer or homotetramer. Heme b serves as cofactor. Formation of the three residue Trp-Tyr-Met cross-link is important for the catalase, but not the peroxidase activity of the enzyme.

Its subcellular location is the cytoplasm. It carries out the reaction H2O2 + AH2 = A + 2 H2O. It catalyses the reaction 2 H2O2 = O2 + 2 H2O. Its function is as follows. Bifunctional enzyme with both catalase and broad-spectrum peroxidase activity. The chain is Catalase-peroxidase from Neosartorya fischeri (strain ATCC 1020 / DSM 3700 / CBS 544.65 / FGSC A1164 / JCM 1740 / NRRL 181 / WB 181) (Aspergillus fischerianus).